The primary structure comprises 241 residues: Probable GTP-binding protein EngB (241 aa).

One can recognise an EngB-type G domain in the interval 56 to 240 (GPVEIAFAGR…RAAIALLLKE (185 aa)). GTP contacts are provided by residues 64–71 (GRSNVGKS), 91–95 (GRTQE), 118–121 (DMPG), 185–188 (TKID), and 219–221 (TSS). Mg(2+) is bound by residues Ser-71 and Thr-93.

This sequence belongs to the TRAFAC class TrmE-Era-EngA-EngB-Septin-like GTPase superfamily. EngB GTPase family. Requires Mg(2+) as cofactor.

In terms of biological role, necessary for normal cell division and for the maintenance of normal septation. The polypeptide is Probable GTP-binding protein EngB (Brucella suis biovar 1 (strain 1330)).